The sequence spans 633 residues: Probable extracellular metalloproteinase 3 (633 aa).

The first 18 residues, 1 to 18 (MHGLLLAGLLALPMNVLA), serve as a signal peptide directing secretion. Residues 19–246 (HPAEQHASNV…VHNVVDYVAS (228 aa)) constitute a propeptide that is removed on maturation. N-linked (GlcNAc...) asparagine glycosylation is present at Asn410. His429 provides a ligand contact to Zn(2+). Glu430 is an active-site residue. His433 lines the Zn(2+) pocket. Asn480 and Asn622 each carry an N-linked (GlcNAc...) asparagine glycan.

The protein belongs to the peptidase M36 family. The cofactor is Zn(2+).

The protein localises to the secreted. Its function is as follows. Secreted metalloproteinase probably acting as a virulence factor. This Trichophyton verrucosum (strain HKI 0517) protein is Probable extracellular metalloproteinase 3 (MEP3).